A 183-amino-acid chain; its full sequence is Fetal and adult testis-expressed transcript protein (183 aa).

The segment at 42–66 (SRSRGASQKKQKLEQKAAGSASAKR) is disordered. A helical transmembrane segment spans residues 163 to 181 (TLIIAVLVSASIANLWLWM).

As to quaternary structure, interacts with BIK and RNF183. Interacts with IMMT/MIC60and EMD. Testis-specific in fetus (aged from 6 to 11 weeks). In adult, expressed predominantly in testis, with some expression in lung, heart, kidney, adrenal gland and whole brain. Highly expressed in certain types of cancer tissues such as hepatocellular carcinoma, colon and gastric cancer. Weakly expressed in normal pancreas.

The protein localises to the mitochondrion. It localises to the mitochondrion outer membrane. Its subcellular location is the endoplasmic reticulum membrane. Involved in the regulation of endoplasmic reticulum (ER)-mitochondria coupling. Negatively regulates the ER-mitochondria distance and Ca(2+) transfer from ER to mitochondria possibly implicating it in the regulation of apoptosis. May collaborate with RNF183 to restrain BIK protein levels thus regulating apoptotic signaling. The sequence is that of Fetal and adult testis-expressed transcript protein (FATE1) from Homo sapiens (Human).